The sequence spans 914 residues: Alanine--tRNA ligase (914 aa).

The Zn(2+) site is built by histidine 608, histidine 612, cysteine 711, and histidine 715.

The protein belongs to the class-II aminoacyl-tRNA synthetase family. Requires Zn(2+) as cofactor.

It localises to the cytoplasm. The enzyme catalyses tRNA(Ala) + L-alanine + ATP = L-alanyl-tRNA(Ala) + AMP + diphosphate. Functionally, catalyzes the attachment of alanine to tRNA(Ala) in a two-step reaction: alanine is first activated by ATP to form Ala-AMP and then transferred to the acceptor end of tRNA(Ala). Also edits incorrectly charged Ser-tRNA(Ala) and Gly-tRNA(Ala) via its editing domain. The protein is Alanine--tRNA ligase of Methanoregula boonei (strain DSM 21154 / JCM 14090 / 6A8).